Here is a 189-residue protein sequence, read N- to C-terminus: Large ribosomal subunit protein uL5 (189 aa).

Belongs to the universal ribosomal protein uL5 family. Part of the 50S ribosomal subunit; part of the 5S rRNA/L5/L18/L25 subcomplex. Contacts the 5S rRNA and the P site tRNA. Forms a bridge to the 30S subunit in the 70S ribosome.

Its function is as follows. This is one of the proteins that bind and probably mediate the attachment of the 5S RNA into the large ribosomal subunit, where it forms part of the central protuberance. In the 70S ribosome it contacts protein S13 of the 30S subunit (bridge B1b), connecting the 2 subunits; this bridge is implicated in subunit movement. Contacts the P site tRNA; the 5S rRNA and some of its associated proteins might help stabilize positioning of ribosome-bound tRNAs. This chain is Large ribosomal subunit protein uL5, found in Salinispora tropica (strain ATCC BAA-916 / DSM 44818 / JCM 13857 / NBRC 105044 / CNB-440).